The following is a 159-amino-acid chain: UPF0262 protein PHZ_c2197 (159 aa).

This sequence belongs to the UPF0262 family.

The polypeptide is UPF0262 protein PHZ_c2197 (Phenylobacterium zucineum (strain HLK1)).